The following is a 170-amino-acid chain: Peptide methionine sulfoxide reductase MsrA (170 aa).

C14 is a catalytic residue.

Belongs to the MsrA Met sulfoxide reductase family.

It catalyses the reaction L-methionyl-[protein] + [thioredoxin]-disulfide + H2O = L-methionyl-(S)-S-oxide-[protein] + [thioredoxin]-dithiol. The enzyme catalyses [thioredoxin]-disulfide + L-methionine + H2O = L-methionine (S)-S-oxide + [thioredoxin]-dithiol. In terms of biological role, has an important function as a repair enzyme for proteins that have been inactivated by oxidation. Catalyzes the reversible oxidation-reduction of methionine sulfoxide in proteins to methionine. This is Peptide methionine sulfoxide reductase MsrA from Streptomyces avermitilis (strain ATCC 31267 / DSM 46492 / JCM 5070 / NBRC 14893 / NCIMB 12804 / NRRL 8165 / MA-4680).